The following is a 218-amino-acid chain: Zinc metalloproteinase-disintegrin-like bothrojarin-2 (218 aa).

Residues 14–100 (PPVCGNELLE…QCPTDDFHKN (87 aa)) form the Disintegrin domain. Residues Val16, Leu21, Glu23, Glu26, and Asp29 each coordinate Ca(2+). Disulfide bonds link Cys28-Cys46, Cys30-Cys41, Cys40-Cys63, Cys54-Cys60, Cys59-Cys85, Cys72-Cys92, Cys79-Cys111, Cys104-Cys116, Cys123-Cys173, and Cys151-Cys161. A D/ECD-tripeptide motif is present at residues 78 to 80 (ECD).

The protein belongs to the venom metalloproteinase (M12B) family. P-III subfamily. P-IIIa sub-subfamily. Monomer. It depends on Zn(2+) as a cofactor. Glycosylated. As to expression, expressed by the venom gland.

The protein resides in the secreted. Functionally, the hemorrhagic metalloproteinase-disintegrin-like bothrojarin-1 is a potent inhibitor of collagen-induced platelet aggregation by blockage of alpha-2/beta-1 (ITGA2/ITGB1) integrin. It does not present any fibrinogen-clotting activity. The chain is Zinc metalloproteinase-disintegrin-like bothrojarin-2 from Bothrops jararaca (Jararaca).